The chain runs to 613 residues: UvrABC system protein C (613 aa).

A GIY-YIG domain is found at 13–92; that stretch reads DKSGVYIMKD…IKKYKPKYNI (80 aa). One can recognise a UVR domain in the interval 204 to 239; sequence DEIINDLRIQMETAAEQLDFEKAAQLRNKITSIKQL.

It belongs to the UvrC family. As to quaternary structure, interacts with UvrB in an incision complex.

Its subcellular location is the cytoplasm. In terms of biological role, the UvrABC repair system catalyzes the recognition and processing of DNA lesions. UvrC both incises the 5' and 3' sides of the lesion. The N-terminal half is responsible for the 3' incision and the C-terminal half is responsible for the 5' incision. This Ruminiclostridium cellulolyticum (strain ATCC 35319 / DSM 5812 / JCM 6584 / H10) (Clostridium cellulolyticum) protein is UvrABC system protein C.